A 408-amino-acid polypeptide reads, in one-letter code: Aurora kinase A-B (408 aa).

Residues 1-10 show a composition bias toward basic and acidic residues; that stretch reads MERAVKENHK. Residues 1 to 128 form a disordered region; sequence MERAVKENHK…QGKTLAVPKE (128 aa). Over residues 85-110 the composition is skewed to polar residues; sequence GHQTSKPQGPNENRNPQQTSHSSTPN. The 251-residue stretch at 140–390 folds into the Protein kinase domain; that stretch reads FEIGRPLGKG…LKGVLEHPWI (251 aa). Residues Lys-150, Lys-169, and 217-220 each bind ATP; that span reads LDYA. Asp-263 functions as the Proton acceptor in the catalytic mechanism. Asp-281 serves as a coordination point for ATP. The tract at residues 287 to 300 is activation segment; sequence HAPSSRRTTLCGTL.

Belongs to the protein kinase superfamily. Ser/Thr protein kinase family. Aurora subfamily. In terms of assembly, interacts with kif2c and kif11. Phosphorylated. Autophosphorylated on a serine residue.

The protein resides in the cytoplasm. Its subcellular location is the cytoskeleton. It is found in the spindle pole. It localises to the microtubule organizing center. The protein localises to the centrosome. It catalyses the reaction L-seryl-[protein] + ATP = O-phospho-L-seryl-[protein] + ADP + H(+). The catalysed reaction is L-threonyl-[protein] + ATP = O-phospho-L-threonyl-[protein] + ADP + H(+). Its function is as follows. Mitotic serine/threonine kinases that contributes to the regulation of cell cycle progression. Associates with the centrosome and the spindle microtubules during mitosis and plays a critical role in various mitotic events including the establishment of mitotic spindle, centrosome duplication, centrosome separation as well as maturation, chromosomal alignment, spindle assembly checkpoint, and cytokinesis. Phosphorylates numerous target proteins. Important for microtubule formation and/or stabilization. The sequence is that of Aurora kinase A-B (aurka-b) from Xenopus laevis (African clawed frog).